Reading from the N-terminus, the 282-residue chain is 5'-nucleotidase SurE (282 aa).

Residues D12, D13, S43, and N98 each contribute to the a divalent metal cation site.

It belongs to the SurE nucleotidase family. Requires a divalent metal cation as cofactor.

It localises to the cytoplasm. The catalysed reaction is a ribonucleoside 5'-phosphate + H2O = a ribonucleoside + phosphate. Functionally, nucleotidase that shows phosphatase activity on nucleoside 5'-monophosphates. In Hyperthermus butylicus (strain DSM 5456 / JCM 9403 / PLM1-5), this protein is 5'-nucleotidase SurE.